The following is a 386-amino-acid chain: DNA-directed RNA polymerase subunit Rpo1C (386 aa).

The protein belongs to the RNA polymerase beta' chain family. In terms of assembly, part of the RNA polymerase complex.

It localises to the cytoplasm. It carries out the reaction RNA(n) + a ribonucleoside 5'-triphosphate = RNA(n+1) + diphosphate. DNA-dependent RNA polymerase (RNAP) catalyzes the transcription of DNA into RNA using the four ribonucleoside triphosphates as substrates. Forms part of the jaw domain. This chain is DNA-directed RNA polymerase subunit Rpo1C, found in Methanococcus maripaludis (strain C6 / ATCC BAA-1332).